We begin with the raw amino-acid sequence, 90 residues long: DNA-directed RNA polymerase subunit Rpo11 (90 aa).

Belongs to the archaeal Rpo11/eukaryotic RPB11/RPC19 RNA polymerase subunit family. Part of the RNA polymerase complex.

The protein localises to the cytoplasm. It catalyses the reaction RNA(n) + a ribonucleoside 5'-triphosphate = RNA(n+1) + diphosphate. Functionally, DNA-dependent RNA polymerase (RNAP) catalyzes the transcription of DNA into RNA using the four ribonucleoside triphosphates as substrates. This chain is DNA-directed RNA polymerase subunit Rpo11, found in Metallosphaera sedula (strain ATCC 51363 / DSM 5348 / JCM 9185 / NBRC 15509 / TH2).